A 434-amino-acid chain; its full sequence is Pre-B-cell leukemia transcription factor 3 (434 aa).

The disordered stretch occupies residues 20-41 (SVQGGMALPPPPHGHEGADGDG). A compositionally biased stretch (basic and acidic residues) spans 32–41 (HGHEGADGDG). The PBC domain maps to 41 to 234 (GRKQDIGDIL…VMILRSRFLD (194 aa)). The PBC-A stretch occupies residues 48-127 (DILHQIMTIT…EGVSGPEKGG (80 aa)). The tract at residues 130–234 (AAAAAAAAAS…VMILRSRFLD (105 aa)) is PBC-B. The segment at residues 235 to 297 (ARRKRRNFSK…NKRIRYKKNI (63 aa)) is a DNA-binding region (homeobox; TALE-type). Residues 326–341 (NQTNSPTTPNSGSSGS) show a composition bias toward low complexity. 2 disordered regions span residues 326-349 (NQTN…NSGD) and 405-434 (ANGG…DTSN). The span at 405 to 422 (ANGGWQDATTPSSVTSPT) shows a compositional bias: polar residues.

It belongs to the TALE/PBX homeobox family. As to quaternary structure, interacts with PBXIP1.

It is found in the nucleus. Transcriptional activator that binds the sequence 5'-ATCAATCAA-3'. The polypeptide is Pre-B-cell leukemia transcription factor 3 (Pbx3) (Mus musculus (Mouse)).